A 607-amino-acid chain; its full sequence is COMPASS component cclA (607 aa).

Positions 1 to 19 are enriched in low complexity; that stretch reads MASTHAAGSPAPSSSINSP. Disordered stretches follow at residues 1–22 and 34–86; these read MAST…PILH and GEGS…KSVA. A compositionally biased stretch (basic residues) spans 57 to 69; the sequence is SKRNKRDSRKKRE. In terms of domain architecture, B30.2/SPRY spans 157-376; it reads IADTDFPHIK…YAFNLKETPA (220 aa). Residues 587 to 607 form a disordered region; sequence NTPITDVPVPPEPEDTPMTGG.

This sequence belongs to the cclA family. In terms of assembly, component of the COMPASS complex.

Its subcellular location is the nucleus. It localises to the chromosome. The protein resides in the telomere. Its function is as follows. Component of the COMPASS (Set1C) complex that specifically mono-, di- and trimethylates histone H3 to form H3K4me1/2/3, which subsequently plays a role in telomere length maintenance and transcription elongation regulation. Controls the production of several secondary metabolites, including monodictyphenone, emodin and emodin derivatives, as well as two anti-osteoporosis polyketides, F9775A and F9775B. The polypeptide is COMPASS component cclA (Emericella nidulans (strain FGSC A4 / ATCC 38163 / CBS 112.46 / NRRL 194 / M139) (Aspergillus nidulans)).